Here is a 449-residue protein sequence, read N- to C-terminus: Type 3 secretion system ATPase (449 aa).

Position 178–183 (Gly-178–Thr-183) interacts with ATP.

This sequence belongs to the ATPase alpha/beta chains family. T3SS ATPase subfamily. The core secretion machinery of the T3SS is composed of approximately 20 different proteins, including cytoplasmic components, a base, an export apparatus and a needle. This subunit is part of the cytosolic complex. Forms homododecamers.

It is found in the cytoplasm. It catalyses the reaction ATP + H2O + cellular proteinSide 1 = ADP + phosphate + cellular proteinSide 2.. Its function is as follows. ATPase component of the type III secretion system (T3SS), also called injectisome, which is used to inject bacterial effector proteins into eukaryotic host cells. Acts as a molecular motor to provide the energy that is required for the export of proteins. Required for type III secretion apparatus (T3SA) formation, proper protein secretion, host cell invasion and virulence. May play a critical role in T3SS substrate recognition, disassembly of the effector/chaperone complex and unfolding of the effector in an ATP-dependent manner prior to secretion. This is Type 3 secretion system ATPase from Pseudomonas syringae pv. tomato (strain ATCC BAA-871 / DC3000).